The primary structure comprises 328 residues: Interleukin-12 subunit beta (328 aa).

The signal sequence occupies residues Met1–Ala22. Residues Asp29–Lys106 enclose the Ig-like C2-type domain. A disulfide bridge connects residues Cys50 and Cys90. N-linked (GlcNAc...) asparagine glycosylation is found at Asn125, Asn135, and Asn222. Positions Pro237–Ser328 constitute a Fibronectin type-III domain.

This sequence belongs to the IL-12B family. As to quaternary structure, heterodimer with IL12A; disulfide-linked. The heterodimer is known as interleukin IL-12. Heterodimer with IL23A; disulfide-linked. The heterodimer is known as interleukin IL-23. Also secreted as a monomer. Interacts with NBR1; this interaction promotes IL-12 secretion.

The protein resides in the secreted. In terms of biological role, cytokine that can act as a growth factor for activated T and NK cells, enhance the lytic activity of NK/lymphokine-activated killer cells, and stimulate the production of IFN-gamma by resting PBMC. Its function is as follows. Associates with IL23A to form the IL-23 interleukin, a heterodimeric cytokine which functions in innate and adaptive immunity. IL-23 may constitute with IL-17 an acute response to infection in peripheral tissues. IL-23 binds to a heterodimeric receptor complex composed of IL12RB1 and IL23R, activates the Jak-Stat signaling cascade, stimulates memory rather than naive T-cells and promotes production of pro-inflammatory cytokines. IL-23 induces autoimmune inflammation and thus may be responsible for autoimmune inflammatory diseases and may be important for tumorigenesis. The chain is Interleukin-12 subunit beta (IL12B) from Macaca mulatta (Rhesus macaque).